The primary structure comprises 83 residues: UPF0297 protein CKR_1221 (83 aa).

It belongs to the UPF0297 family.

This chain is UPF0297 protein CKR_1221, found in Clostridium kluyveri (strain NBRC 12016).